We begin with the raw amino-acid sequence, 610 residues long: Ectonucleoside triphosphate diphosphohydrolase 7 (610 aa).

The Cytoplasmic segment spans residues 1–28 (MARISFSCLFPASWHCSLPSVTQFSRQR). The helical transmembrane segment at 29 to 49 (VALLIISVAVFILVFAAVADL) threads the bilayer. At 50-555 (QLWSSRAFRD…VSWFRISFVY (506 aa)) the chain is on the vesicular side. Residue Glu217 is the Proton acceptor of the active site. N-linked (GlcNAc...) asparagine glycosylation is found at Asn336 and Asn400. A disulfide bridge links Cys454 with Cys483. Residues 556-576 (NHYLFFACILVVLLSIVLYIL) traverse the membrane as a helical segment. The Cytoplasmic segment spans residues 577-610 (RLRRIHRRQARASALDLLLMEEGVHTVLEPGIPT).

Belongs to the GDA1/CD39 NTPase family. The cofactor is Ca(2+). It depends on Mg(2+) as a cofactor.

Its subcellular location is the cytoplasmic vesicle membrane. The enzyme catalyses a ribonucleoside 5'-triphosphate + H2O = a ribonucleoside 5'-diphosphate + phosphate + H(+). It carries out the reaction UTP + H2O = UDP + phosphate + H(+). The catalysed reaction is GTP + H2O = GDP + phosphate + H(+). It catalyses the reaction CTP + H2O = CDP + phosphate + H(+). Catalyzes the hydrolysis of nucleoside triphosphates and diphosphates in a calcium- or magnesium-dependent manner. Preferentially hydrolyzes nucleoside 5'-triphosphates, with substrate preference for UTP &gt; GTP &gt; CTP. Hydrolyzes ATP and nucleoside diphosphates only to a minor extent. In Xenopus tropicalis (Western clawed frog), this protein is Ectonucleoside triphosphate diphosphohydrolase 7 (entpd7).